The sequence spans 210 residues: Orotate phosphoribosyltransferase (210 aa).

5-phospho-alpha-D-ribose 1-diphosphate-binding positions include arginine 94, lysine 98, histidine 100, and 120-128 (EDLISTGGS). Serine 124 lines the orotate pocket.

This sequence belongs to the purine/pyrimidine phosphoribosyltransferase family. PyrE subfamily. In terms of assembly, homodimer. Mg(2+) serves as cofactor.

It catalyses the reaction orotidine 5'-phosphate + diphosphate = orotate + 5-phospho-alpha-D-ribose 1-diphosphate. Its pathway is pyrimidine metabolism; UMP biosynthesis via de novo pathway; UMP from orotate: step 1/2. Catalyzes the transfer of a ribosyl phosphate group from 5-phosphoribose 1-diphosphate to orotate, leading to the formation of orotidine monophosphate (OMP). The chain is Orotate phosphoribosyltransferase from Bacillus mycoides (strain KBAB4) (Bacillus weihenstephanensis).